The sequence spans 281 residues: DegV domain-containing protein DR_1986 (281 aa).

Residues 3–278 (IAIVTDSTSD…PGAVGVALEP (276 aa)) enclose the DegV domain. Hexadecanoate contacts are provided by T61 and S93.

Functionally, may bind long-chain fatty acids, such as palmitate, and may play a role in lipid transport or fatty acid metabolism. The protein is DegV domain-containing protein DR_1986 of Deinococcus radiodurans (strain ATCC 13939 / DSM 20539 / JCM 16871 / CCUG 27074 / LMG 4051 / NBRC 15346 / NCIMB 9279 / VKM B-1422 / R1).